We begin with the raw amino-acid sequence, 232 residues long: Ubiquinone biosynthesis O-methyltransferase (232 aa).

Positions 36, 55, 76, and 120 each coordinate S-adenosyl-L-methionine.

This sequence belongs to the methyltransferase superfamily. UbiG/COQ3 family.

The enzyme catalyses a 3-demethylubiquinol + S-adenosyl-L-methionine = a ubiquinol + S-adenosyl-L-homocysteine + H(+). It catalyses the reaction a 3-(all-trans-polyprenyl)benzene-1,2-diol + S-adenosyl-L-methionine = a 2-methoxy-6-(all-trans-polyprenyl)phenol + S-adenosyl-L-homocysteine + H(+). The protein operates within cofactor biosynthesis; ubiquinone biosynthesis. In terms of biological role, O-methyltransferase that catalyzes the 2 O-methylation steps in the ubiquinone biosynthetic pathway. This is Ubiquinone biosynthesis O-methyltransferase from Pseudomonas paraeruginosa (strain DSM 24068 / PA7) (Pseudomonas aeruginosa (strain PA7)).